A 395-amino-acid polypeptide reads, in one-letter code: Non-homologous end joining protein Ku (395 aa).

Residues 9–181 (ISFGLVSIPI…PPEDAAPDGD (173 aa)) enclose the Ku domain. Residues 252 to 395 (RAARTSRDDE…SASSRKRTSA (144 aa)) form a disordered region. Composition is skewed to polar residues over residues 283 to 292 (SSKTSGQSSG) and 311 to 320 (GKTVTRSGDS). Residues 351–361 (TARKTTAKKTT) show a composition bias toward basic residues. Over residues 362–371 (AKGTTGTTAA) the composition is skewed to low complexity.

It belongs to the prokaryotic Ku family. As to quaternary structure, homodimer. Interacts with LigD.

In terms of biological role, with LigD forms a non-homologous end joining (NHEJ) DNA repair enzyme, which repairs dsDNA breaks with reduced fidelity. Binds linear dsDNA with 5'- and 3'- overhangs but not closed circular dsDNA nor ssDNA. Recruits and stimulates the ligase activity of LigD. This Streptomyces griseus subsp. griseus (strain JCM 4626 / CBS 651.72 / NBRC 13350 / KCC S-0626 / ISP 5235) protein is Non-homologous end joining protein Ku.